Here is a 427-residue protein sequence, read N- to C-terminus: UPF0229 protein YeaH (427 aa).

Positions 79–90 (NDHFVQNDRIER) are enriched in basic and acidic residues. The tract at residues 79 to 110 (NDHFVQNDRIERPQGGGGGSGSGQGQASQDGE) is disordered. Residues 92 to 102 (QGGGGGSGSGQ) are compositionally biased toward gly residues.

Belongs to the UPF0229 family.

The protein is UPF0229 protein YeaH of Escherichia coli O139:H28 (strain E24377A / ETEC).